A 304-amino-acid polypeptide reads, in one-letter code: Hairy/enhancer-of-split related with YRPW motif protein 1 (304 aa).

Positions 1-52 (MKRAHPDYSSSDSELDETVEVEKESADENGNLSSALGSMSPTTSSQILARKR) are disordered. Polar residues predominate over residues 28–47 (ENGNLSSALGSMSPTTSSQI). The transcriptional repression and interaction with NCOR1 and SIN3A stretch occupies residues 48–117 (LARKRRRGII…GGKGYFDAHA (70 aa)). Residues 49–104 (ARKRRRGIIEKRRRDRINNSLSELRRLVPSAFEKQGSAKLEKAEILQMTVDHLKML) form the bHLH domain. In terms of domain architecture, Orange spans 122–158 (YRSLGFRECLAEVARYLSIIEGLDASDPLRVRLVSHL). The tract at residues 191-234 (AHPLLLPQSGHGNTGTSASPTDPHHQGRLAAAHPEAPALRAPPS) is disordered. Polar residues predominate over residues 200 to 210 (GHGNTGTSASP). The span at 218–234 (RLAAAHPEAPALRAPPS) shows a compositional bias: low complexity.

This sequence belongs to the HEY family. Self-associates. Interacts with HES1 and HEYL. Interacts with HDAC1, NCOR1 and SIN3A. Interacts with GATA4 and GATA6. Interacts with CCDC89/BOIP.

It localises to the nucleus. Functionally, transcriptional repressor which binds preferentially to the canonical E box sequence 5'-CACGTG-3'. Downstream effector of Notch signaling required for cardiovascular development. Specifically required for the Notch-induced endocardial epithelial to mesenchymal transition, which is itself criticial for cardiac valve and septum development. May be required in conjunction with HEY2 to specify arterial cell fate or identity. Promotes maintenance of neuronal precursor cells and glial versus neuronal fate specification. Represses transcription by the cardiac transcriptional activators GATA4 and GATA6 and by the neuronal bHLH factors ASCL1/MASH1 and NEUROD4/MATH3. This is Hairy/enhancer-of-split related with YRPW motif protein 1 (HEY1) from Canis lupus familiaris (Dog).